The primary structure comprises 72 residues: Translation initiation factor IF-1 (72 aa).

In terms of domain architecture, S1-like spans 1-72 (MAKDDVIEID…DKGRITFRYK (72 aa)).

This sequence belongs to the IF-1 family. In terms of assembly, component of the 30S ribosomal translation pre-initiation complex which assembles on the 30S ribosome in the order IF-2 and IF-3, IF-1 and N-formylmethionyl-tRNA(fMet); mRNA recruitment can occur at any time during PIC assembly.

The protein localises to the cytoplasm. Its function is as follows. One of the essential components for the initiation of protein synthesis. Stabilizes the binding of IF-2 and IF-3 on the 30S subunit to which N-formylmethionyl-tRNA(fMet) subsequently binds. Helps modulate mRNA selection, yielding the 30S pre-initiation complex (PIC). Upon addition of the 50S ribosomal subunit IF-1, IF-2 and IF-3 are released leaving the mature 70S translation initiation complex. The chain is Translation initiation factor IF-1 from Sulfurovum sp. (strain NBC37-1).